Consider the following 353-residue polypeptide: UPF0283 membrane protein YcjF (353 aa).

Residues 1–19 (MSEPLKPRIDFAEPLKEEP) are compositionally biased toward basic and acidic residues. Residues 1 to 35 (MSEPLKPRIDFAEPLKEEPTSAFKAQQTFSEAESR) are disordered. 3 helical membrane passes run 70–90 (MVMG…VQWT), 100–120 (VALG…GSVV), and 213–233 (ESTL…FIAW).

The protein belongs to the UPF0283 family.

It localises to the cell inner membrane. The protein is UPF0283 membrane protein YcjF of Salmonella newport (strain SL254).